The chain runs to 68 residues: Small integral membrane protein 10-like protein 3 (68 aa).

This is Small integral membrane protein 10-like protein 3 from Homo sapiens (Human).